A 532-amino-acid chain; its full sequence is UDP-glucuronosyltransferase 1A6 (532 aa).

Residues 1-26 (MACLLRSFQRISAGVFFLALWGMVVG) form the signal peptide. N-linked (GlcNAc...) asparagine glycosylation is found at asparagine 294 and asparagine 346. A helical transmembrane segment spans residues 490–506 (VIGFLLAVVLTVAFITF).

Belongs to the UDP-glycosyltransferase family. In terms of assembly, isoform 1 interacts with isoform 3/i2 suggesting that oligomerization is involved in negative regulation of transferase activity by isoform 3. Isoform 1 also interacts with respective i2 isoforms of UGT1A1, UGT1A3, UGT1A4, UGT1A7, UGT1A8, UGT1A9 and UGT1A10. Expressed in skin. Isoforms 1 and 3 are expressed in kidney and liver. Isoform 1 but not isoform 2 is expressed in colon, esophagus and small intestine.

The protein localises to the microsome. The protein resides in the endoplasmic reticulum membrane. The catalysed reaction is glucuronate acceptor + UDP-alpha-D-glucuronate = acceptor beta-D-glucuronoside + UDP + H(+). It catalyses the reaction (5Z,8Z,11Z,14Z)-eicosatetraenoate + UDP-alpha-D-glucuronate = O-[(5Z),(8Z),(11Z),(14Z)-eicosatetraenoyl]-beta-D-glucuronate + UDP. It carries out the reaction 15-hydroxy-(5Z,8Z,11Z,13E)-eicosatetraenoate + UDP-alpha-D-glucuronate = 15-O-(beta-D-glucuronosyl)-(5Z,8Z,11Z,14Z)-eicosatetraenoate + UDP + H(+). The enzyme catalyses (E)-ferulate + UDP-alpha-D-glucuronate = (E)-4-O-(beta-D-glucuronosyl)-ferulate + UDP + H(+). The catalysed reaction is (E)-ferulate + UDP-alpha-D-glucuronate = (E)-ferulic acid beta-D-glucuronate ester + UDP. Functionally, UDP-glucuronosyltransferase (UGT) that catalyzes phase II biotransformation reactions in which lipophilic substrates are conjugated with glucuronic acid to facilitate their inactivation and excretion from the body. Essential for the elimination and detoxification of drugs, xenobiotics and endogenous compounds. Involved in the glucuronidation of arachidonic acid (AA) and AA-derived eicosanoids including 15-HETE and 20-HETE. Conjugates small planar phenolic molecules such as 4-nitrophenol, 1-naphthol, and 4-methylumbelliferone. The bulky phenol 4-hydroxybiphenyl, androgens and estrogens are not substrates. 2-hydroxybiphenyl is an excellent substrate. Involved in the glucuronidation of the phytochemical ferulic acid at the phenolic or the carboxylic acid group. Its function is as follows. Isoform 3 lacks transferase activity but acts as a negative regulator of isoform 1. The protein is UDP-glucuronosyltransferase 1A6 of Homo sapiens (Human).